Consider the following 209-residue polypeptide: PF03932 family protein CutC (209 aa).

Belongs to the CutC family.

The protein localises to the cytoplasm. Might participate in the control of copper homeostasis; data from other bacteria suggests it is not involved. This chain is PF03932 family protein CutC, found in Enterococcus faecalis (strain ATCC 700802 / V583).